Here is a 398-residue protein sequence, read N- to C-terminus: Thyrotropin-releasing hormone receptor (398 aa).

Over 1–28 (MENETGSELNQTQLQPRAVVALEYQVVT) the chain is Extracellular. 2 N-linked (GlcNAc...) asparagine glycosylation sites follow: Asn-3 and Asn-10. The chain crosses the membrane as a helical span at residues 29 to 51 (ILLVLIICGLGIVGNIMVVLVVM). The Cytoplasmic segment spans residues 52-61 (RTKHMRTPTN). Residues 62 to 83 (CYLVSLAVADLMVLVAAGLPNI) traverse the membrane as a helical segment. Topologically, residues 84 to 99 (TDSIYGSWVYGYVGCL) are extracellular. Cysteines 98 and 179 form a disulfide. Residues 100–121 (CITYLQYLGINASSCSITAFTI) form a helical membrane-spanning segment. Residues 122–144 (ERYIAICHPIKAQFLCTFSRAKK) lie on the Cytoplasmic side of the membrane. The chain crosses the membrane as a helical span at residues 145 to 168 (IIIFVWAFTSIYCMLWFFLLDLNI). Residues 169–193 (STYKDAIVVSCGYKISRNYYSPIYL) lie on the Extracellular side of the membrane. A helical membrane pass occupies residues 194-215 (MDFGVFYVVPMILATVLYGFIA). Topologically, residues 216 to 266 (RILFLSPIPSDPKENSNTWKNDSTHQNKNLNSKTSNRYFNSTVSSRKQVTK) are cytoplasmic. The helical transmembrane segment at 267-288 (MLAVVVILFALLWMPYRTLVVV) threads the bilayer. The Extracellular segment spans residues 289–296 (NSFLSSPF). Residues 297-319 (QENWFLLFCRICIYLNSAINPVI) form a helical membrane-spanning segment. Over 320 to 398 (YNLMSQKFRA…LASEVTFSQS (79 aa)) the chain is Cytoplasmic.

Belongs to the G-protein coupled receptor 1 family.

Its subcellular location is the cell membrane. In terms of biological role, receptor for thyrotropin-releasing hormone (TRH). Upon ligand binding, this G-protein-coupled receptor triggers activation of the phosphatidylinositol (IP3)-calcium-protein kinase C (PKC) pathway. This is Thyrotropin-releasing hormone receptor (TRHR) from Ovis aries (Sheep).